The following is an 851-amino-acid chain: Leucine--tRNA ligase (851 aa).

The short motif at 51–61 (PYPSGDLHMGH) is the 'HIGH' region element. The short motif at 615-619 (KMSKS) is the 'KMSKS' region element. Lys618 lines the ATP pocket.

This sequence belongs to the class-I aminoacyl-tRNA synthetase family.

The protein localises to the cytoplasm. It catalyses the reaction tRNA(Leu) + L-leucine + ATP = L-leucyl-tRNA(Leu) + AMP + diphosphate. This Clavibacter michiganensis subsp. michiganensis (strain NCPPB 382) protein is Leucine--tRNA ligase.